The sequence spans 121 residues: Small ribosomal subunit protein uS13 (121 aa).

Positions 91–121 (HRKGLPVRGQRTRTNARTRKGKKKTVAGKKK) are disordered.

It belongs to the universal ribosomal protein uS13 family. As to quaternary structure, part of the 30S ribosomal subunit. Forms a loose heterodimer with protein S19. Forms two bridges to the 50S subunit in the 70S ribosome.

Located at the top of the head of the 30S subunit, it contacts several helices of the 16S rRNA. In the 70S ribosome it contacts the 23S rRNA (bridge B1a) and protein L5 of the 50S subunit (bridge B1b), connecting the 2 subunits; these bridges are implicated in subunit movement. Contacts the tRNAs in the A and P-sites. In Treponema denticola (strain ATCC 35405 / DSM 14222 / CIP 103919 / JCM 8153 / KCTC 15104), this protein is Small ribosomal subunit protein uS13.